Reading from the N-terminus, the 732-residue chain is Polyadenylate-binding protein, cytoplasmic and nuclear (732 aa).

Residues 1-19 (MSAETSTTPAPAENTNGTP) show a composition bias toward polar residues. A disordered region spans residues 1–26 (MSAETSTTPAPAENTNGTPDNAPAPE). RRM domains follow at residues 42–120 (ASLY…WSQR), 130–207 (GNVF…HHIS), 223–300 (TNIY…RAQK), and 326–454 (VNLY…LAQR). 2 disordered regions span residues 357–413 (VMRD…KKPL) and 706–732 (MKNK…ENKA). Residues 371–412 (SETKESANKENEKAAEGEKEPAAEEKEKEEKKEAEQKPEKKP) show a composition bias toward basic and acidic residues. The region spanning 630-707 (VGVLTAQALS…ALSVYDEYMK (78 aa)) is the PABC domain.

Belongs to the polyadenylate-binding protein type-1 family.

It localises to the cytoplasm. It is found in the nucleus. Functionally, binds the poly(A) tail of mRNA. Appears to be an important mediator of the multiple roles of the poly(A) tail in mRNA biogenesis, stability and translation. In the nucleus, involved in both mRNA cleavage and polyadenylation. Is also required for efficient mRNA export to the cytoplasm. Acts in concert with a poly(A)-specific nuclease (PAN) to affect poly(A) tail shortening, which may occur concomitantly with either nucleocytoplasmic mRNA transport or translational initiation. In the cytoplasm, stimulates translation initiation and regulates mRNA decay through translation termination-coupled poly(A) shortening, probably mediated by PAN. This is Polyadenylate-binding protein, cytoplasmic and nuclear (pab1) from Emericella nidulans (strain FGSC A4 / ATCC 38163 / CBS 112.46 / NRRL 194 / M139) (Aspergillus nidulans).